We begin with the raw amino-acid sequence, 310 residues long: tRNA-cytidine(32) 2-sulfurtransferase (310 aa).

The PP-loop motif signature appears at 48-53; sequence SGGKDS. The [4Fe-4S] cluster site is built by cysteine 123, cysteine 126, and cysteine 214.

The protein belongs to the TtcA family. In terms of assembly, homodimer. The cofactor is Mg(2+). [4Fe-4S] cluster serves as cofactor.

The protein resides in the cytoplasm. It catalyses the reaction cytidine(32) in tRNA + S-sulfanyl-L-cysteinyl-[cysteine desulfurase] + AH2 + ATP = 2-thiocytidine(32) in tRNA + L-cysteinyl-[cysteine desulfurase] + A + AMP + diphosphate + H(+). It participates in tRNA modification. Catalyzes the ATP-dependent 2-thiolation of cytidine in position 32 of tRNA, to form 2-thiocytidine (s(2)C32). The sulfur atoms are provided by the cysteine/cysteine desulfurase (IscS) system. The sequence is that of tRNA-cytidine(32) 2-sulfurtransferase from Vibrio vulnificus (strain YJ016).